The primary structure comprises 122 residues: Large ribosomal subunit protein uL14 (122 aa).

Belongs to the universal ribosomal protein uL14 family. In terms of assembly, part of the 50S ribosomal subunit. Forms a cluster with proteins L3 and L19. In the 70S ribosome, L14 and L19 interact and together make contacts with the 16S rRNA in bridges B5 and B8.

Functionally, binds to 23S rRNA. Forms part of two intersubunit bridges in the 70S ribosome. In Bartonella quintana (strain Toulouse) (Rochalimaea quintana), this protein is Large ribosomal subunit protein uL14.